We begin with the raw amino-acid sequence, 270 residues long: Hydroxyethylthiazole kinase (270 aa).

Met47 is a binding site for substrate. Residues Arg123 and Thr169 each contribute to the ATP site. A substrate-binding site is contributed by Gly196.

The protein belongs to the Thz kinase family. The cofactor is Mg(2+).

The enzyme catalyses 5-(2-hydroxyethyl)-4-methylthiazole + ATP = 4-methyl-5-(2-phosphooxyethyl)-thiazole + ADP + H(+). It participates in cofactor biosynthesis; thiamine diphosphate biosynthesis; 4-methyl-5-(2-phosphoethyl)-thiazole from 5-(2-hydroxyethyl)-4-methylthiazole: step 1/1. Its function is as follows. Catalyzes the phosphorylation of the hydroxyl group of 4-methyl-5-beta-hydroxyethylthiazole (THZ). This is Hydroxyethylthiazole kinase from Roseiflexus sp. (strain RS-1).